The following is a 182-amino-acid chain: Protein GrpE (182 aa).

The interval 1-35 (MTQENQTPPPEQENLAADPAVETTAETPAVKTPEQ) is disordered.

Belongs to the GrpE family. In terms of assembly, homodimer.

It is found in the cytoplasm. Participates actively in the response to hyperosmotic and heat shock by preventing the aggregation of stress-denatured proteins, in association with DnaK and GrpE. It is the nucleotide exchange factor for DnaK and may function as a thermosensor. Unfolded proteins bind initially to DnaJ; upon interaction with the DnaJ-bound protein, DnaK hydrolyzes its bound ATP, resulting in the formation of a stable complex. GrpE releases ADP from DnaK; ATP binding to DnaK triggers the release of the substrate protein, thus completing the reaction cycle. Several rounds of ATP-dependent interactions between DnaJ, DnaK and GrpE are required for fully efficient folding. This chain is Protein GrpE, found in Polynucleobacter necessarius subsp. necessarius (strain STIR1).